We begin with the raw amino-acid sequence, 91 residues long: Probable Fe(2+)-trafficking protein (91 aa).

Belongs to the Fe(2+)-trafficking protein family.

In terms of biological role, could be a mediator in iron transactions between iron acquisition and iron-requiring processes, such as synthesis and/or repair of Fe-S clusters in biosynthetic enzymes. In Paraburkholderia phytofirmans (strain DSM 17436 / LMG 22146 / PsJN) (Burkholderia phytofirmans), this protein is Probable Fe(2+)-trafficking protein.